Here is a 205-residue protein sequence, read N- to C-terminus: Histone H1, early embryonic (205 aa).

2 disordered regions span residues 1-21 (MAEK…HPPA) and 94-205 (AKAQ…AKSK). In terms of domain architecture, H15 spans 17-91 (AHPPAAEMVA…GASGSFKVNV (75 aa)). Residues 98 to 124 (ASEKAKKEKEKAKLLAQREKAKEKGCS) are compositionally biased toward basic and acidic residues. 2 stretches are compositionally biased toward basic residues: residues 135–150 (PKKV…KPVK) and 157–205 (EKKK…AKSK).

This sequence belongs to the histone H1/H5 family.

The protein resides in the nucleus. The protein localises to the chromosome. Its function is as follows. Histones H1 are necessary for the condensation of nucleosome chains into higher-order structures. The polypeptide is Histone H1, early embryonic (Strongylocentrotus purpuratus (Purple sea urchin)).